The chain runs to 363 residues: Aminomethyltransferase (363 aa).

The protein belongs to the GcvT family. As to quaternary structure, the glycine cleavage system is composed of four proteins: P, T, L and H.

It carries out the reaction N(6)-[(R)-S(8)-aminomethyldihydrolipoyl]-L-lysyl-[protein] + (6S)-5,6,7,8-tetrahydrofolate = N(6)-[(R)-dihydrolipoyl]-L-lysyl-[protein] + (6R)-5,10-methylene-5,6,7,8-tetrahydrofolate + NH4(+). In terms of biological role, the glycine cleavage system catalyzes the degradation of glycine. The sequence is that of Aminomethyltransferase from Dechloromonas aromatica (strain RCB).